The primary structure comprises 238 residues: Serine protease SplE (238 aa).

Residues 1–36 form the signal peptide; it reads MNKNIIIKSIAALTILTSVTGVGTTVVEGIQQTAKA. Active-site charge relay system residues include His-75, Asp-113, and Ser-191.

This sequence belongs to the peptidase S1B family.

The protein localises to the secreted. The chain is Serine protease SplE (splE) from Staphylococcus aureus (strain USA300).